Consider the following 317-residue polypeptide: MSSSSDAIKAALEKGRAAGLSATGGKNADYIPFLASVPSDLFGLAVVTADGQTFKTGDADIAFAIESISKVFTLALVMEEIGPDSVREKVGADPTGLPFNSVIALELHNGKSLSPLVNAGAIATASLVPGDTADARWNNILECQCGFAGRRLKLSNEVNQSEQTTNFHNRAIAWLLYSAGTCYSDPMEAVDIYTRQCSTLVTATDLATMGATLAAGGVNPISGKRMVSAGNVAPILVEMTMEGLYTALGDWAYTVGLPGKSGVGGGIMAVVPGELAIAAFSPPLDPAGNSVKAMAAVAAVADSLGHNLYTTRGKVSS.

Residues Ser67, Asn118, Glu162, Asn169, Tyr193, Tyr245, and Val263 each coordinate substrate.

This sequence belongs to the glutaminase family. As to quaternary structure, homotetramer.

The catalysed reaction is L-glutamine + H2O = L-glutamate + NH4(+). The chain is Glutaminase from Brucella abortus (strain S19).